The sequence spans 111 residues: Prefoldin subunit 2 (111 aa).

Coiled-coil stretches lie at residues 1–36 and 72–92; these read MEQR…KDEH and LETK…TLIQ.

Belongs to the prefoldin subunit beta family. As to quaternary structure, heterohexamer of two PFD-alpha type and four PFD-beta type subunits.

The protein localises to the cytoplasm. Functionally, binds specifically to cytosolic chaperonin (c-CPN) and transfers target proteins to it. Binds to nascent polypeptide chain and promotes folding in an environment in which there are many competing pathways for nonnative proteins. The protein is Prefoldin subunit 2 (GIM4) of Saccharomyces cerevisiae (strain ATCC 204508 / S288c) (Baker's yeast).